Consider the following 123-residue polypeptide: Putative hypoxanthine phosphoribosyltransferase (123 aa).

Its function is as follows. May play a role in purine salvage. This chain is Putative hypoxanthine phosphoribosyltransferase, found in Methanosarcina mazei (strain ATCC BAA-159 / DSM 3647 / Goe1 / Go1 / JCM 11833 / OCM 88) (Methanosarcina frisia).